Here is a 553-residue protein sequence, read N- to C-terminus: Ribonuclease J 2 (553 aa).

Zn(2+) is bound by residues His69, His71, His138, and Asp160. Substrate is bound at residue 361–365 (RVSGH).

Belongs to the metallo-beta-lactamase superfamily. RNA-metabolizing metallo-beta-lactamase-like family. Bacterial RNase J subfamily. Homodimer, may be a subunit of the RNA degradosome. It depends on Zn(2+) as a cofactor.

Its subcellular location is the cytoplasm. An RNase that has 5'-3' exonuclease and possibly endonuclease activity. Involved in maturation of rRNA and in some organisms also mRNA maturation and/or decay. Has an overlapping but not completely redundant role with RNase J1 in the decay of mRNA. The chain is Ribonuclease J 2 from Streptococcus pyogenes serotype M3 (strain ATCC BAA-595 / MGAS315).